The primary structure comprises 502 residues: Protein MGF 505-5R (502 aa).

It belongs to the asfivirus MGF 505 family.

In terms of biological role, plays a role in virus cell tropism, and may be required for efficient virus replication in macrophages. This Ornithodoros (relapsing fever ticks) protein is Protein MGF 505-5R.